The following is a 724-amino-acid chain: Catalase-peroxidase (724 aa).

The segment at 1–20 (MDENKTKPAGKCPVMHGGNT) is disordered. Residues 98 to 225 (WHSAGTYRTA…LAAVQMGLIY (128 aa)) constitute a cross-link (tryptophyl-tyrosyl-methioninium (Trp-Tyr) (with M-251)). His99 serves as the catalytic Proton acceptor. The tryptophyl-tyrosyl-methioninium (Tyr-Met) (with W-98) cross-link spans 225 to 251 (YVNPEGVDGNPDPLRTAQDMRVTFSRM). A heme b-binding site is contributed by His266.

Belongs to the peroxidase family. Peroxidase/catalase subfamily. As to quaternary structure, homodimer or homotetramer. Heme b serves as cofactor. Formation of the three residue Trp-Tyr-Met cross-link is important for the catalase, but not the peroxidase activity of the enzyme.

The enzyme catalyses H2O2 + AH2 = A + 2 H2O. The catalysed reaction is 2 H2O2 = O2 + 2 H2O. Bifunctional enzyme with both catalase and broad-spectrum peroxidase activity. The polypeptide is Catalase-peroxidase (Pectobacterium carotovorum subsp. carotovorum (strain PC1)).